Here is a 495-residue protein sequence, read N- to C-terminus: Bifunctional protein GlmU (495 aa).

The tract at residues 1 to 241 (MTFPGDTAVL…SALVAGVNNR (241 aa)) is pyrophosphorylase. UDP-N-acetyl-alpha-D-glucosamine-binding positions include 12–15 (LAAG), lysine 26, glutamine 83, 88–89 (GT), 112–114 (SGD), glycine 151, glutamate 166, asparagine 181, and asparagine 239. Aspartate 114 is a binding site for Mg(2+). A Mg(2+)-binding site is contributed by asparagine 239. The segment at 242–262 (VQLAQLASELNRRVVAAHQLA) is linker. The interval 263–495 (GVTVVDPATT…TQPPDADQTP (233 aa)) is N-acetyltransferase. The UDP-N-acetyl-alpha-D-glucosamine site is built by arginine 344 and lysine 362. Histidine 374 functions as the Proton acceptor in the catalytic mechanism. Positions 377 and 388 each coordinate UDP-N-acetyl-alpha-D-glucosamine. Acetyl-CoA contacts are provided by residues alanine 391, 397–398 (NY), serine 416, and alanine 434. The disordered stretch occupies residues 457–495 (IENWVQRKRPGSPAAQASKRASEMACQQPTQPPDADQTP). Over residues 483–495 (QQPTQPPDADQTP) the composition is skewed to low complexity.

The protein in the N-terminal section; belongs to the N-acetylglucosamine-1-phosphate uridyltransferase family. It in the C-terminal section; belongs to the transferase hexapeptide repeat family. As to quaternary structure, homotrimer. Mg(2+) serves as cofactor.

The protein resides in the cytoplasm. The catalysed reaction is alpha-D-glucosamine 1-phosphate + acetyl-CoA = N-acetyl-alpha-D-glucosamine 1-phosphate + CoA + H(+). The enzyme catalyses N-acetyl-alpha-D-glucosamine 1-phosphate + UTP + H(+) = UDP-N-acetyl-alpha-D-glucosamine + diphosphate. It participates in nucleotide-sugar biosynthesis; UDP-N-acetyl-alpha-D-glucosamine biosynthesis; N-acetyl-alpha-D-glucosamine 1-phosphate from alpha-D-glucosamine 6-phosphate (route II): step 2/2. It functions in the pathway nucleotide-sugar biosynthesis; UDP-N-acetyl-alpha-D-glucosamine biosynthesis; UDP-N-acetyl-alpha-D-glucosamine from N-acetyl-alpha-D-glucosamine 1-phosphate: step 1/1. Its pathway is bacterial outer membrane biogenesis; LPS lipid A biosynthesis. In terms of biological role, catalyzes the last two sequential reactions in the de novo biosynthetic pathway for UDP-N-acetylglucosamine (UDP-GlcNAc). The C-terminal domain catalyzes the transfer of acetyl group from acetyl coenzyme A to glucosamine-1-phosphate (GlcN-1-P) to produce N-acetylglucosamine-1-phosphate (GlcNAc-1-P), which is converted into UDP-GlcNAc by the transfer of uridine 5-monophosphate (from uridine 5-triphosphate), a reaction catalyzed by the N-terminal domain. The chain is Bifunctional protein GlmU from Mycobacterium bovis (strain ATCC BAA-935 / AF2122/97).